We begin with the raw amino-acid sequence, 334 residues long: Cytochrome c biogenesis protein CcsA (334 aa).

The next 8 membrane-spanning stretches (helical) occupy residues Asn12–Pro32, Trp35–Leu55, Ile67–Ile87, Phe96–Leu116, Val141–Phe161, Ile242–Asn262, Trp277–Trp297, and Ala303–Leu323.

The protein belongs to the CcmF/CycK/Ccl1/NrfE/CcsA family. May interact with ccs1.

Its subcellular location is the cellular thylakoid membrane. Required during biogenesis of c-type cytochromes (cytochrome c6 and cytochrome f) at the step of heme attachment. This is Cytochrome c biogenesis protein CcsA from Synechocystis sp. (strain ATCC 27184 / PCC 6803 / Kazusa).